The following is a 294-amino-acid chain: N-acetylmuramic acid 6-phosphate etherase (294 aa).

The region spanning 54 to 217 (VIKSFEEEGR…STASMIGVGK (164 aa)) is the SIS domain. Glu82 serves as the catalytic Proton donor. Glu113 is an active-site residue.

Belongs to the GCKR-like family. MurNAc-6-P etherase subfamily. In terms of assembly, homodimer.

The catalysed reaction is N-acetyl-D-muramate 6-phosphate + H2O = N-acetyl-D-glucosamine 6-phosphate + (R)-lactate. Its pathway is amino-sugar metabolism; N-acetylmuramate degradation. In terms of biological role, specifically catalyzes the cleavage of the D-lactyl ether substituent of MurNAc 6-phosphate, producing GlcNAc 6-phosphate and D-lactate. This is N-acetylmuramic acid 6-phosphate etherase from Bacillus cereus (strain AH187).